A 369-amino-acid chain; its full sequence is Chaperone protein DnaJ (369 aa).

The region spanning 4–69 (SYYEILEVEK…KKRALYDRYG (66 aa)) is the J domain. Residues 130 to 207 (GCKKTIKVQY…CKGKTYILKD (78 aa)) form a CR-type zinc finger. Residues C143, C146, C159, C162, C181, C184, C195, and C198 each coordinate Zn(2+). CXXCXGXG motif repeat units lie at residues 143-150 (CESCDGTG), 159-166 (CKQCNGQG), 181-188 (CGACQGKG), and 195-202 (CQACKGKT).

The protein belongs to the DnaJ family. Homodimer. Zn(2+) serves as cofactor.

Its subcellular location is the cytoplasm. In terms of biological role, participates actively in the response to hyperosmotic and heat shock by preventing the aggregation of stress-denatured proteins and by disaggregating proteins, also in an autonomous, DnaK-independent fashion. Unfolded proteins bind initially to DnaJ; upon interaction with the DnaJ-bound protein, DnaK hydrolyzes its bound ATP, resulting in the formation of a stable complex. GrpE releases ADP from DnaK; ATP binding to DnaK triggers the release of the substrate protein, thus completing the reaction cycle. Several rounds of ATP-dependent interactions between DnaJ, DnaK and GrpE are required for fully efficient folding. Also involved, together with DnaK and GrpE, in the DNA replication of plasmids through activation of initiation proteins. The chain is Chaperone protein DnaJ from Helicobacter pylori (strain ATCC 700392 / 26695) (Campylobacter pylori).